We begin with the raw amino-acid sequence, 598 residues long: Thiamine transporter (598 aa).

Residues 1-41 (MSFGSKVSRALRFLEIPVKDRASVSFLKNPDLQPIKSANQT) lie on the Cytoplasmic side of the membrane. The helical transmembrane segment at 42–62 (WGFWSNFAYWGVMSFSVGTWM) threads the bilayer. The Extracellular portion of the chain corresponds to 63–73 (SASSALGVGLS). The chain crosses the membrane as a helical span at residues 74–94 (YPETIGTFIVGDVLTIIFTLA). At 95–111 (NSCPGYDWKVGFTLAQR) the chain is on the cytoplasmic side. The helical transmembrane segment at 112 to 132 (FVFGIYGSAFGIIIRILMSIV) threads the bilayer. Topologically, residues 133 to 173 (NYGSNAWVGGLCINMILDSWSHHYLHLPNTLSSKVAMTTKE) are extracellular. Residues 174 to 194 (LIGFIIFHVLTAFCYLMKPYH) form a helical membrane-spanning segment. The Cytoplasmic portion of the chain corresponds to 195 to 197 (MNY). The helical transmembrane segment at 198–218 (ILIWSCVATFFSMLGMVIYLA) threads the bilayer. Residues 219–240 (KQAHGVGELFTSTKSTATGSTK) lie on the Extracellular side of the membrane. The chain crosses the membrane as a helical span at residues 241-261 (AWAWVYMISYWFGSVSPGSTN). At 262–274 (QSDYSRFGSSNWA) the chain is on the cytoplasmic side. Residues 275-295 (IWAGTICALLIPTTLIPVFGV) form a helical membrane-spanning segment. Residues 296-332 (IGASTCDKLYGEQYWMPMDIFNHWLTTNYSAGARAGA) are Extracellular-facing. Residues 333 to 353 (FFCGLSFVLSQMSYTISNCGF) traverse the membrane as a helical segment. Residues 354–371 (ASGMDLAGLLPKYVDIKR) lie on the Cytoplasmic side of the membrane. Residues 372-392 (GALFAACVSWACLPWNFYNSS) form a helical membrane-spanning segment. The Extracellular portion of the chain corresponds to 393–394 (ST). Residues 395 to 415 (FLTVMSSFGVVMTPIISVMIC) traverse the membrane as a helical segment. The Cytoplasmic portion of the chain corresponds to 416–446 (DNFLIRKRQYSITNAFILKGEYYFTKGVNWR). The chain crosses the membrane as a helical span at residues 447–467 (AIVAWVCGMTPGLPGIAWEVN). The Extracellular segment spans residues 468 to 483 (NDYFHNTGIVNFFYGD). Residues 484 to 504 (SFFSFLISFFVYWGLCLLFPF) traverse the membrane as a helical segment. The Cytoplasmic segment spans residues 505–598 (KITVKHDDKD…QSSTASEKAA (94 aa)). Position 560 is a phosphoserine (S560). The tract at residues 574–598 (NTNEFEIVHHKNNEKQSSTASEKAA) is disordered. The segment covering 588 to 598 (KQSSTASEKAA) has biased composition (polar residues).

It belongs to the purine-cytosine permease (2.A.39) family.

It localises to the membrane. Its function is as follows. Responsible for intake of thiamine. This chain is Thiamine transporter (THI7), found in Saccharomyces cerevisiae (strain ATCC 204508 / S288c) (Baker's yeast).